We begin with the raw amino-acid sequence, 159 residues long: Histone H2A (159 aa).

Positions 1–10 (MDSTGTGAGG) are enriched in gly residues. 2 disordered regions span residues 1 to 31 (MDSTGTGAGGKGKKGAAGRKVGGPRKKSVSR) and 133 to 159 (KTAEKASSGGSKEAKSPKKAAKSPKKA). Composition is skewed to basic residues over residues 11–29 (KGKKGAAGRKVGGPRKKSV) and 149–159 (PKKAAKSPKKA). 2 consecutive short sequence motifs (SPKK motif) follow at residues 148-151 (SPKK) and 155-158 (SPKK).

The protein belongs to the histone H2A family. As to quaternary structure, the nucleosome is a histone octamer containing two molecules each of H2A, H2B, H3 and H4 assembled in one H3-H4 heterotetramer and two H2A-H2B heterodimers. The octamer wraps approximately 147 bp of DNA.

Its subcellular location is the nucleus. The protein resides in the chromosome. Core component of nucleosome. Nucleosomes wrap and compact DNA into chromatin, limiting DNA accessibility to the cellular machineries which require DNA as a template. Histones thereby play a central role in transcription regulation, DNA repair, DNA replication and chromosomal stability. DNA accessibility is regulated via a complex set of post-translational modifications of histones, also called histone code, and nucleosome remodeling. This Zea mays (Maize) protein is Histone H2A.